The following is a 4699-amino-acid chain: PKS-NRPS hybrid synthetase cheA (4699 aa).

Over residues 1-21 the composition is skewed to acidic residues; it reads MSDNDDEWNGFSDDNGEDDGP. Disordered stretches follow at residues 1-38 and 136-165; these read MSDN…WDVP and DGWR…HTQH. Residues 136-148 are compositionally biased toward basic and acidic residues; sequence DGWRFHSHPDPQH. The interval 172–520 is N-terminal acylcarrier protein transacylase domain (SAT); it reads SLDTIAELSN…VQQNVEEMAK (349 aa). The disordered stretch occupies residues 625-836; the sequence is PLPSVEDNVA…AGAPGARVTR (212 aa). The segment covering 674 to 688 has biased composition (low complexity); it reads TQGSQGSQGRRTPGS. Residues 724 to 737 show a composition bias toward basic residues; that stretch reads PKRRGRPPGSKNKK. A Ketosynthase family 3 (KS3) domain is found at 737–1138; sequence KKDQAPAPAE…GANAHAILEA (402 aa). The segment covering 764–777 has biased composition (low complexity); sequence ASAPRRGLRAAPAA. Residues 802–816 are compositionally biased toward polar residues; sequence ATASTPRAQSDQGTG. Active-site for beta-ketoacyl synthase activity residues include Cys873, His1012, and His1058. A malonyl-CoA:ACP transacylase (MAT) domain region spans residues 1250–1573; the sequence is VFTGQGAQWP…VGTLLRQRDA (324 aa). An N-terminal hotdog fold region spans residues 1644 to 1777; the sequence is NELLGTRIMD…ANLIISLGEP (134 aa). The PKS/mFAS DH domain maps to 1644-1947; the sequence is NELLGTRIMD…TKPLVPPTPS (304 aa). A dehydratase (DH) domain region spans residues 1645-1941; sequence ELLGTRIMDN…QLQGLHTKPL (297 aa). The active-site Proton acceptor; for dehydratase activity is His1676. The C-terminal hotdog fold stretch occupies residues 1794-1947; sequence MLDVPAERFY…TKPLVPPTPS (154 aa). The Proton donor; for dehydratase activity role is filled by Asp1854. The methyltransferase (MT) domain stretch occupies residues 2050–2241; it reads LNRFYIEALG…RNTGFSGADE (192 aa). The interval 2794–2967 is ketoreductase (KR) domain; the sequence is TYWLVGLTGG…PAAAVNIGAV (174 aa). The Carrier 1 domain maps to 3076–3153; it reads DASEILEDAY…ALFELVKERA (78 aa). Ser3113 is modified (O-(pantetheine 4'-phosphoryl)serine). The tract at residues 3164–3265 is disordered; sequence EQPDQVKSPR…PVASSPDAGL (102 aa). 2 stretches are compositionally biased toward polar residues: residues 3200–3209 and 3218–3233; these read SLDQGSSWDS and GHDS…SSPI. The interval 3268–3696 is condensation (C) domain; the sequence is SVPLSFSQAR…PISRISKPPL (429 aa). The interval 3730 to 4113 is adenylation (A) domain; sequence IQAHPDKLAL…GGLILEGRID (384 aa). One can recognise a Carrier 2 domain in the interval 4236–4316; it reads EGLPAMQHLI…TMAALVASGS (81 aa). A thiolation and peptide carrier (T) domain region spans residues 4241 to 4313; sequence MQHLIKQLWE…TLETMAALVA (73 aa). Ser4276 carries the O-(pantetheine 4'-phosphoryl)serine modification. The interval 4367 to 4598 is reductase (R) domain; the sequence is LTGSTGFLGR…ISVHTVAAAI (232 aa).

In the C-terminal section; belongs to the NRP synthetase family.

It participates in secondary metabolite biosynthesis. Its function is as follows. PKS-NRPS hybrid synthetase; part of the gene cluster that mediates the biosynthesis of chaetoglobosin A which has a unique inhibitory activity against actin polymerization in mammalian cells. Chaetoglobosin A and its intermediates are involved in the morphological differentiation of C.globosum. The first step of the pathway is the synthesis of prochaetoglobosin I via condensation of one acetyl-CoA, 8 malonyl-CoA, and a L-tryptophan molecule by the PKS-NRPS hybrid synthetase cheA, followed by reduction of backbone double bond to install desired geometry by the enoyl reductase cheB. Further multiple oxidation steps performed by the cytochrome P450 monooxygenases cheE and cheG, as well as by the FAD-linked oxidoreductase cheF, lead to the formation of chaetoglobosin A. Depending on the order of action of these reductases, distinct intermediates can be identified. Within the pathway, the cytochrome P450 monooxygenase cheE catalyzes a stereospecific epoxidation on prochaetoglobosin I, cytoglobosin D, and chaetoglobosin J intermediates. The FAD-linked oxidoreductase cheF performs dehydrogenation of the C-20 hydroxyl groups in the 20-dihyrochaetoglobosin A and cytoglobosin D intermediates. Finally, the cytochrome P450 monooxygenase cheG can catalyze the stereospecific dihydroxylation of prochaetoglobosin I and prochaetoglobosin IV at C-19 and C-20, respectively. The Diels-Alderase cheD may play a role in the post-PKS-NRPS biosynthetic steps catalyzing Diels-Alder cyclization. In Chaetomium globosum (strain ATCC 6205 / CBS 148.51 / DSM 1962 / NBRC 6347 / NRRL 1970) (Soil fungus), this protein is PKS-NRPS hybrid synthetase cheA.